A 241-amino-acid chain; its full sequence is Ribonuclease PH (241 aa).

Residues R87 and 125 to 127 (GTR) contribute to the phosphate site.

This sequence belongs to the RNase PH family. In terms of assembly, homohexameric ring arranged as a trimer of dimers.

The catalysed reaction is tRNA(n+1) + phosphate = tRNA(n) + a ribonucleoside 5'-diphosphate. Phosphorolytic 3'-5' exoribonuclease that plays an important role in tRNA 3'-end maturation. Removes nucleotide residues following the 3'-CCA terminus of tRNAs; can also add nucleotides to the ends of RNA molecules by using nucleoside diphosphates as substrates, but this may not be physiologically important. Probably plays a role in initiation of 16S rRNA degradation (leading to ribosome degradation) during starvation. This chain is Ribonuclease PH, found in Nitrosomonas europaea (strain ATCC 19718 / CIP 103999 / KCTC 2705 / NBRC 14298).